A 137-amino-acid chain; its full sequence is uncharacterized protein (137 aa).

This is an uncharacterized protein from Mycobacterium tuberculosis (strain ATCC 25618 / H37Rv).